Consider the following 422-residue polypeptide: N-acylglucosamine 2-epimerase (422 aa).

The leucine-zipper stretch occupies residues 185-206; it reads LLNLVEQLGEADEELAGISAEL.

This sequence belongs to the N-acylglucosamine 2-epimerase family. As to quaternary structure, homodimer. Forms a heterodimer with renin and inhibits its activity.

It catalyses the reaction an N-acyl-D-glucosamine = an N-acyl-D-mannosamine. Its pathway is amino-sugar metabolism; N-acetylneuraminate degradation. In terms of biological role, catalyzes the interconversion of N-acetylglucosamine to N-acetylmannosamine. Involved in the N-glycolylneuraminic acid (Neu5Gc) degradation pathway. The protein is N-acylglucosamine 2-epimerase (RENBP) of Bos taurus (Bovine).